A 180-amino-acid polypeptide reads, in one-letter code: Virion protein US10 homolog (180 aa).

It belongs to the herpesviridae US10 family. Post-translationally, phosphorylated.

It localises to the virion tegument. The protein localises to the host nucleus matrix. The polypeptide is Virion protein US10 homolog (64) (Varicella-zoster virus (strain Dumas) (HHV-3)).